We begin with the raw amino-acid sequence, 79 residues long: Cytochrome b-c1 complex subunit 10 (79 aa).

Residues 1-23 (MISFFPNKPMYHVQPHISFITPE) are Mitochondrial matrix-facing. A helical membrane pass occupies residues 24-47 (RTMKTIPAFSRWAFAAVAGVFVFA). The Mitochondrial intermembrane portion of the chain corresponds to 48–79 (MQVPKVKTTILQPIAFIGDHFKDKTPEEDKWL).

The protein belongs to the UQCR11/QCR10 family. Component of the ubiquinol-cytochrome c oxidoreductase (cytochrome b-c1 complex, complex III, CIII), a multisubunit enzyme composed of 3 respiratory subunits cytochrome b, cytochrome c1 and Rieske protein, 2 core protein subunits, and additional low-molecular weight protein subunits. The complex exists as an obligatory dimer and forms supercomplexes (SCs) in the inner mitochondrial membrane with cytochrome c oxidase (complex IV, CIV).

Its subcellular location is the mitochondrion inner membrane. Functionally, component of the ubiquinol-cytochrome c oxidoreductase, a multisubunit transmembrane complex that is part of the mitochondrial electron transport chain which drives oxidative phosphorylation. The respiratory chain contains 3 multisubunit complexes succinate dehydrogenase (complex II, CII), ubiquinol-cytochrome c oxidoreductase (cytochrome b-c1 complex, complex III, CIII) and cytochrome c oxidase (complex IV, CIV), that cooperate to transfer electrons derived from NADH and succinate to molecular oxygen, creating an electrochemical gradient over the inner membrane that drives transmembrane transport and the ATP synthase. The cytochrome b-c1 complex catalyzes electron transfer from ubiquinol to cytochrome c, linking this redox reaction to translocation of protons across the mitochondrial inner membrane, with protons being carried across the membrane as hydrogens on the quinol. In the process called Q cycle, 2 protons are consumed from the matrix, 4 protons are released into the intermembrane space and 2 electrons are passed to cytochrome c. QCR10 has a role in CIII assembly and RIP1 stability. The protein is Cytochrome b-c1 complex subunit 10 of Schizosaccharomyces pombe (strain 972 / ATCC 24843) (Fission yeast).